Here is a 1208-residue protein sequence, read N- to C-terminus: DNA-directed RNA polymerase subunit beta (1208 aa).

Residues 1182-1208 (EKKAAEQVEDEKDDVIQNFETAEDNLD) are disordered.

Belongs to the RNA polymerase beta chain family. The RNAP catalytic core consists of 2 alpha, 1 beta, 1 beta' and 1 omega subunit. When a sigma factor is associated with the core the holoenzyme is formed, which can initiate transcription.

It carries out the reaction RNA(n) + a ribonucleoside 5'-triphosphate = RNA(n+1) + diphosphate. In terms of biological role, DNA-dependent RNA polymerase catalyzes the transcription of DNA into RNA using the four ribonucleoside triphosphates as substrates. The protein is DNA-directed RNA polymerase subunit beta of Enterococcus faecium (Streptococcus faecium).